We begin with the raw amino-acid sequence, 85 residues long: Cell division topological specificity factor (85 aa).

This sequence belongs to the MinE family.

Functionally, prevents the cell division inhibition by proteins MinC and MinD at internal division sites while permitting inhibition at polar sites. This ensures cell division at the proper site by restricting the formation of a division septum at the midpoint of the long axis of the cell. The polypeptide is Cell division topological specificity factor (Xylella fastidiosa (strain M23)).